A 359-amino-acid polypeptide reads, in one-letter code: Phospho-N-acetylmuramoyl-pentapeptide-transferase (359 aa).

Transmembrane regions (helical) follow at residues Gln-3–Ile-23, Val-55–Ile-75, Gly-84–Ile-104, Thr-117–Phe-137, Ile-156–Ala-176, Leu-190–Phe-210, Leu-231–Ala-251, Ile-255–Thr-275, Val-283–Phe-303, and Val-330–Tyr-350.

It belongs to the glycosyltransferase 4 family. MraY subfamily. Requires Mg(2+) as cofactor.

It localises to the cell membrane. It carries out the reaction UDP-N-acetyl-alpha-D-muramoyl-L-alanyl-gamma-D-glutamyl-meso-2,6-diaminopimeloyl-D-alanyl-D-alanine + di-trans,octa-cis-undecaprenyl phosphate = di-trans,octa-cis-undecaprenyl diphospho-N-acetyl-alpha-D-muramoyl-L-alanyl-D-glutamyl-meso-2,6-diaminopimeloyl-D-alanyl-D-alanine + UMP. Its pathway is cell wall biogenesis; peptidoglycan biosynthesis. Functionally, catalyzes the initial step of the lipid cycle reactions in the biosynthesis of the cell wall peptidoglycan: transfers peptidoglycan precursor phospho-MurNAc-pentapeptide from UDP-MurNAc-pentapeptide onto the lipid carrier undecaprenyl phosphate, yielding undecaprenyl-pyrophosphoryl-MurNAc-pentapeptide, known as lipid I. The sequence is that of Phospho-N-acetylmuramoyl-pentapeptide-transferase from Mycolicibacterium vanbaalenii (strain DSM 7251 / JCM 13017 / BCRC 16820 / KCTC 9966 / NRRL B-24157 / PYR-1) (Mycobacterium vanbaalenii).